We begin with the raw amino-acid sequence, 432 residues long: Adenylosuccinate synthetase (432 aa).

GTP contacts are provided by residues 13 to 19 (GDEGKGK) and 41 to 43 (GHT). D14 (proton acceptor) is an active-site residue. The Mg(2+) site is built by D14 and G41. IMP is bound by residues 14–17 (DEGK), 39–42 (NAGH), T130, R144, Q225, T240, and R304. H42 (proton donor) is an active-site residue. A substrate-binding site is contributed by 300–306 (ATTGRRR). Residues R306, 332–334 (KLD), and 415–417 (STG) each bind GTP.

This sequence belongs to the adenylosuccinate synthetase family. As to quaternary structure, homodimer. It depends on Mg(2+) as a cofactor.

It localises to the cytoplasm. It carries out the reaction IMP + L-aspartate + GTP = N(6)-(1,2-dicarboxyethyl)-AMP + GDP + phosphate + 2 H(+). It participates in purine metabolism; AMP biosynthesis via de novo pathway; AMP from IMP: step 1/2. Functionally, plays an important role in the de novo pathway of purine nucleotide biosynthesis. Catalyzes the first committed step in the biosynthesis of AMP from IMP. This Pectobacterium carotovorum subsp. carotovorum (strain PC1) protein is Adenylosuccinate synthetase.